Here is a 474-residue protein sequence, read N- to C-terminus: MTKKLHIKTWGCQMNEYDSSKMADLLDATHGYQLTEVAEEADVLLLNTCSIREKAQEKVFHQLGRWKLLKEKNPDLIIGVGGCVASQEGDHIRQRAHYVDIIFGPQTLHRLPEMINAVRGNRSPVVDISFPEIEKFDRLPEPRADGPTAFVSIMEGCNKYCTYCVVPYTRGEEVSRPCDDILFEIAQLAAQGVREVNLLGQNVNAWRGENYDGTTGSFADLLRLVAAIDGIDRIRFTTSHPIEFTDDIIEVYRDTPELVSFLHLPVQSGSDRVLNLMGRTHTALEYKAIIRKLREARPDIQISSDFIVGFPGETTDDFEKTMKLIADVNFDMSYSFIFSARPGTPAADMVDDVPEEDKKQRLYILQERINQQAMAWSRRMLGTVQRILVEGTSRKSLMELSGRTENNRVVNFEGTPDMVGKFVDVEIVDVYTNSLRGKIVRTEAEMGLRIAESPESVIARTRKENDLGVGIYQP.

Residues 3 to 120 enclose the MTTase N-terminal domain; it reads KKLHIKTWGC…LPEMINAVRG (118 aa). [4Fe-4S] cluster-binding residues include cysteine 12, cysteine 49, cysteine 83, cysteine 157, cysteine 161, and cysteine 164. A Radical SAM core domain is found at 143-375; the sequence is RADGPTAFVS…QERINQQAMA (233 aa). Residues 378-441 form the TRAM domain; it reads RRMLGTVQRI…TNSLRGKIVR (64 aa).

Belongs to the methylthiotransferase family. MiaB subfamily. In terms of assembly, monomer. [4Fe-4S] cluster is required as a cofactor.

It localises to the cytoplasm. It carries out the reaction N(6)-dimethylallyladenosine(37) in tRNA + (sulfur carrier)-SH + AH2 + 2 S-adenosyl-L-methionine = 2-methylsulfanyl-N(6)-dimethylallyladenosine(37) in tRNA + (sulfur carrier)-H + 5'-deoxyadenosine + L-methionine + A + S-adenosyl-L-homocysteine + 2 H(+). Catalyzes the methylthiolation of N6-(dimethylallyl)adenosine (i(6)A), leading to the formation of 2-methylthio-N6-(dimethylallyl)adenosine (ms(2)i(6)A) at position 37 in tRNAs that read codons beginning with uridine. The chain is tRNA-2-methylthio-N(6)-dimethylallyladenosine synthase from Klebsiella pneumoniae (strain 342).